We begin with the raw amino-acid sequence, 290 residues long: HTH-type transcriptional regulator BudR (290 aa).

Residues 1-58 (MELRYLRYFVAVAEARNFTRAAHDLGISQPPLSQQIQRLEREIGTPLLRRLTRGVELT) enclose the HTH lysR-type domain. Residues 18–37 (FTRAAHDLGISQPPLSQQIQ) constitute a DNA-binding region (H-T-H motif).

Belongs to the LysR transcriptional regulatory family.

In terms of biological role, regulator of the budABC operon for 2,3-butanediol synthesis. This chain is HTH-type transcriptional regulator BudR (budR), found in Raoultella terrigena (Klebsiella terrigena).